The chain runs to 246 residues: Pyridoxine 5'-phosphate synthase (246 aa).

3-amino-2-oxopropyl phosphate is bound at residue Asn-12. Position 14-15 (14-15 (DH)) interacts with 1-deoxy-D-xylulose 5-phosphate. Residue Arg-23 coordinates 3-amino-2-oxopropyl phosphate. Residue His-48 is the Proton acceptor of the active site. Positions 50 and 55 each coordinate 1-deoxy-D-xylulose 5-phosphate. Residue Glu-75 is the Proton acceptor of the active site. Thr-105 contributes to the 1-deoxy-D-xylulose 5-phosphate binding site. The Proton donor role is filled by His-196. 3-amino-2-oxopropyl phosphate contacts are provided by residues Gly-197 and 218–219 (GH).

It belongs to the PNP synthase family. In terms of assembly, homooctamer; tetramer of dimers.

It localises to the cytoplasm. It carries out the reaction 3-amino-2-oxopropyl phosphate + 1-deoxy-D-xylulose 5-phosphate = pyridoxine 5'-phosphate + phosphate + 2 H2O + H(+). The protein operates within cofactor biosynthesis; pyridoxine 5'-phosphate biosynthesis; pyridoxine 5'-phosphate from D-erythrose 4-phosphate: step 5/5. Catalyzes the complicated ring closure reaction between the two acyclic compounds 1-deoxy-D-xylulose-5-phosphate (DXP) and 3-amino-2-oxopropyl phosphate (1-amino-acetone-3-phosphate or AAP) to form pyridoxine 5'-phosphate (PNP) and inorganic phosphate. The polypeptide is Pyridoxine 5'-phosphate synthase (Nitrosococcus oceani (strain ATCC 19707 / BCRC 17464 / JCM 30415 / NCIMB 11848 / C-107)).